Consider the following 182-residue polypeptide: ATP synthase subunit delta (182 aa).

It belongs to the ATPase delta chain family. F-type ATPases have 2 components, F(1) - the catalytic core - and F(0) - the membrane proton channel. F(1) has five subunits: alpha(3), beta(3), gamma(1), delta(1), epsilon(1). CF(0) has four main subunits: a(1), b(1), b'(1) and c(10-14). The alpha and beta chains form an alternating ring which encloses part of the gamma chain. F(1) is attached to F(0) by a central stalk formed by the gamma and epsilon chains, while a peripheral stalk is formed by the delta, b and b' chains.

It is found in the cellular thylakoid membrane. Functionally, f(1)F(0) ATP synthase produces ATP from ADP in the presence of a proton or sodium gradient. F-type ATPases consist of two structural domains, F(1) containing the extramembraneous catalytic core and F(0) containing the membrane proton channel, linked together by a central stalk and a peripheral stalk. During catalysis, ATP synthesis in the catalytic domain of F(1) is coupled via a rotary mechanism of the central stalk subunits to proton translocation. Its function is as follows. This protein is part of the stalk that links CF(0) to CF(1). It either transmits conformational changes from CF(0) to CF(1) or is implicated in proton conduction. This Prochlorococcus marinus (strain MIT 9303) protein is ATP synthase subunit delta.